Reading from the N-terminus, the 486-residue chain is Vanillin dehydrogenase (486 aa).

NAD(+)-binding positions include Gly-210 to Pro-211, Gly-230 to Ser-231, and Glu-252 to Gly-254. The Proton acceptor role is filled by Glu-252. Cys-286 (nucleophile) is an active-site residue. Residue Glu-380 to Phe-382 participates in NAD(+) binding.

Belongs to the aldehyde dehydrogenase family.

It carries out the reaction vanillin + NAD(+) + H2O = vanillate + NADH + 2 H(+). In terms of biological role, catalyzes NAD(+)-dependent oxidation of vanillin to vanillate. Also oxidizes other aromatic aldehydes including benzaldehyde, coniferyl aldehyde and cinnamaldehyde, but has a preference for vanillin. Not active with NADP(+). Involved in the degradation pathway of lignin-derived aromatic compounds of plant cell walls. Catalyzes the conversion of vanillin to vanillate due to toxicity of vanillin to the cells. The polypeptide is Vanillin dehydrogenase (Amycolatopsis sp. (strain ATCC 39116 / 75iv2)).